The primary structure comprises 338 residues: D-erythrose-4-phosphate dehydrogenase (338 aa).

12–13 contributes to the NAD(+) binding site; the sequence is RI. Substrate contacts are provided by residues 154 to 156, arginine 200, 213 to 214, and arginine 236; these read SCT and TK. Cysteine 155 acts as the Nucleophile in catalysis. Asparagine 318 lines the NAD(+) pocket.

This sequence belongs to the glyceraldehyde-3-phosphate dehydrogenase family. Epd subfamily. Homotetramer.

The protein localises to the cytoplasm. It catalyses the reaction D-erythrose 4-phosphate + NAD(+) + H2O = 4-phospho-D-erythronate + NADH + 2 H(+). It participates in cofactor biosynthesis; pyridoxine 5'-phosphate biosynthesis; pyridoxine 5'-phosphate from D-erythrose 4-phosphate: step 1/5. In terms of biological role, catalyzes the NAD-dependent conversion of D-erythrose 4-phosphate to 4-phosphoerythronate. The polypeptide is D-erythrose-4-phosphate dehydrogenase (Pectobacterium atrosepticum (strain SCRI 1043 / ATCC BAA-672) (Erwinia carotovora subsp. atroseptica)).